Reading from the N-terminus, the 428-residue chain is Trigger factor (428 aa).

One can recognise a PPIase FKBP-type domain in the interval 166–250; it reads GDIVTFDFKG…IKNIKEKILP (85 aa).

The protein belongs to the FKBP-type PPIase family. Tig subfamily.

It localises to the cytoplasm. It catalyses the reaction [protein]-peptidylproline (omega=180) = [protein]-peptidylproline (omega=0). Functionally, involved in protein export. Acts as a chaperone by maintaining the newly synthesized protein in an open conformation. Functions as a peptidyl-prolyl cis-trans isomerase. This Mycoplasma capricolum subsp. capricolum (strain California kid / ATCC 27343 / NCTC 10154) protein is Trigger factor.